The sequence spans 344 residues: Small ribosomal subunit biogenesis GTPase RsgA (344 aa).

A CP-type G domain is found at 100-268 (KNELSRPDYY…LIDSPGIREF (169 aa)). GTP is bound by residues 156-159 (NKID) and 210-218 (GQSGVGKSS). Zn(2+)-binding residues include Cys-292, Cys-297, His-299, and Cys-305.

Belongs to the TRAFAC class YlqF/YawG GTPase family. RsgA subfamily. As to quaternary structure, monomer. Associates with 30S ribosomal subunit, binds 16S rRNA. It depends on Zn(2+) as a cofactor.

It localises to the cytoplasm. One of several proteins that assist in the late maturation steps of the functional core of the 30S ribosomal subunit. Helps release RbfA from mature subunits. May play a role in the assembly of ribosomal proteins into the subunit. Circularly permuted GTPase that catalyzes slow GTP hydrolysis, GTPase activity is stimulated by the 30S ribosomal subunit. This chain is Small ribosomal subunit biogenesis GTPase RsgA, found in Actinobacillus pleuropneumoniae serotype 5b (strain L20).